The sequence spans 423 residues: Serine hydroxymethyltransferase (423 aa).

Residues L120 and 124 to 126 contribute to the (6S)-5,6,7,8-tetrahydrofolate site; that span reads GHL. Residue K229 is modified to N6-(pyridoxal phosphate)lysine. (6S)-5,6,7,8-tetrahydrofolate is bound at residue 353 to 355; the sequence is SPF.

It belongs to the SHMT family. Homodimer. The cofactor is pyridoxal 5'-phosphate.

The protein resides in the cytoplasm. It carries out the reaction (6R)-5,10-methylene-5,6,7,8-tetrahydrofolate + glycine + H2O = (6S)-5,6,7,8-tetrahydrofolate + L-serine. The protein operates within one-carbon metabolism; tetrahydrofolate interconversion. It participates in amino-acid biosynthesis; glycine biosynthesis; glycine from L-serine: step 1/1. Its function is as follows. Catalyzes the reversible interconversion of serine and glycine with tetrahydrofolate (THF) serving as the one-carbon carrier. This reaction serves as the major source of one-carbon groups required for the biosynthesis of purines, thymidylate, methionine, and other important biomolecules. Also exhibits THF-independent aldolase activity toward beta-hydroxyamino acids, producing glycine and aldehydes, via a retro-aldol mechanism. The chain is Serine hydroxymethyltransferase from Synechococcus sp. (strain RCC307).